A 63-amino-acid chain; its full sequence is Bowman-Birk type proteinase inhibitor (63 aa).

7 cysteine pairs are disulfide-bonded: cysteine 7–cysteine 60, cysteine 8–cysteine 23, cysteine 11–cysteine 56, cysteine 13–cysteine 21, cysteine 30–cysteine 37, cysteine 34–cysteine 49, and cysteine 39–cysteine 47.

As to quaternary structure, monomer.

Inhibits trypsin stoichiometrically at the molar ratio of 1:2, with a dissociation constant of 4.2 nM. Does not inhibit chymotrypsin. This is Bowman-Birk type proteinase inhibitor from Lupinus albus (White lupine).